Reading from the N-terminus, the 194-residue chain is WASH complex subunit 3 (194 aa).

M1 is subject to N-acetylmethionine. The stretch at 46-74 (TVCEEKLADLSLRIQQIETTLNILDAKLS) forms a coiled coil. A compositionally biased stretch (polar residues) spans 98-123 (THSEATSEQSQQNSLQDSGPQESEVT). Disordered stretches follow at residues 98–125 (THSE…VTPE) and 158–194 (SEGL…SFSD).

The protein belongs to the CCDC53 family. In terms of assembly, component of the WASH core complex also described as WASH regulatory complex (SHRC) composed of WASHC1, WASHC2, WASHC3, WASHC4 and WASHC5. The WASH core complex associates via WASHC2 with the F-actin-capping protein dimer (formed by CAPZA1, CAPZA2 or CAPZA3 and CAPZB) in a transient or substoichiometric manner which was initially described as WASH complex.

The protein localises to the early endosome. Its function is as follows. Acts as a component of the WASH core complex that functions as a nucleation-promoting factor (NPF) at the surface of endosomes, where it recruits and activates the Arp2/3 complex to induce actin polymerization, playing a key role in the fission of tubules that serve as transport intermediates during endosome sorting. This is WASH complex subunit 3 from Bos taurus (Bovine).